The primary structure comprises 269 residues: Thyroxine 5-deiodinase (269 aa).

Topologically, residues 1-14 (MLPAPHTCCRLLQQ) are cytoplasmic. Residues 15–35 (LLACCLLLPRFLLTVLLLWLL) traverse the membrane as a helical; Signal-anchor for type II membrane protein segment. Residues 36–269 (DFPCVRRRVI…TGNGALVIQV (234 aa)) are Extracellular-facing. Sec-133 is an active-site residue. Sec-133 is a non-standard amino acid (selenocysteine).

Belongs to the iodothyronine deiodinase family. As to quaternary structure, monomer. Homodimer. May undergo minor heretodimerization with DIO1 and DIO2.

The protein resides in the cell membrane. It is found in the endosome membrane. It catalyses the reaction 3,3',5'-triiodo-L-thyronine + iodide + A + H(+) = L-thyroxine + AH2. It carries out the reaction 3,3'-diiodo-L-thyronine + iodide + A + H(+) = 3,3',5-triiodo-L-thyronine + AH2. The enzyme catalyses 3-iodo-L-thyronine + iodide + A + H(+) = 3,5-diiodo-L-thyronine + AH2. The catalysed reaction is L-thyronine + iodide + A + H(+) = 3-iodo-L-thyronine + AH2. It catalyses the reaction 3',5'-diiodo-L-thyronine + iodide + A + H(+) = 3,3',5'-triiodo-L-thyronine + AH2. It carries out the reaction 3'-iodo-L-thyronine + iodide + A + H(+) = 3,3'-diiodo-L-thyronine + AH2. The enzyme catalyses 3,3',5'-triiodothyronamine + iodide + A + H(+) = 3,3',5,5'-tetraiodothyronamine + AH2. The catalysed reaction is 3',5'-diiodothyronamine + iodide + A + H(+) = 3,3',5'-triiodothyronamine + AH2. It catalyses the reaction 3,3'-diiodothyronamine + iodide + A + H(+) = 3,3',5-triiodothyronamine + AH2. It carries out the reaction 3-iodothyronamine + iodide + A + H(+) = 3,5-diiodothyronamine + AH2. The enzyme catalyses 3'-iodothyronamine + iodide + A + H(+) = 3,3'-diiodothyronamine + AH2. The catalysed reaction is thyronamine + iodide + A + H(+) = 3-iodothyronamine + AH2. Plays a crucial role in the metabolism of thyroid hormones (TH) and has specific roles in TH activation and inactivation by deiodination. Catalyzes the deiodination of L-thyroxine (T4) to 3,3',5'-triiodothyronine (rT3), 3,5-diiodothyronine (3,5-T2) to 3-monoiodothyronine (3-T1), rT3 to 3',5'-diiodothyronine (3',5'-T2) and 3,3'-diiodothyronine (3,3'-T2) to 3'-monoiodothyronine (3'-T1) via inner-ring deiodination (IRD). Catalyzes the deiodination of 3,5,3'-triiodothyronine (T3) to 3,3'-diiodothyronine (3,3'-T2) via IRD. Catalyzes the deiodination of 3-T1 to L-thyronine (T0) via outer-ring deiodination (ORD). Catalyzes the tyrosyl ring deiodinations of 3,3',5,5'-tetraiodothyronamine, 3,3',5'-triiodothyronamine, 3,5,3'-triiodothyronamine, 3,5-diiodothyronamine, 3,3'-diiodothyronamine and 3-iodothyronamine. The protein is Thyroxine 5-deiodinase (dio3) of Aquarana catesbeiana (American bullfrog).